Consider the following 772-residue polypeptide: Calcium-binding mitochondrial carrier protein (772 aa).

The segment at 1–377 (MFANRVRQAQ…SISDFEKSTG (377 aa)) is N-terminal domain. 4 EF-hand domains span residues 132 to 165 (LDAD…ELMA), 166 to 201 (KPEA…SLDP), 235 to 270 (LQQE…VKLR), and 347 to 382 (ITPL…NINK). Ca(2+) contacts are provided by aspartate 145, aspartate 147, threonine 149, tyrosine 151, glutamate 156, aspartate 179, aspartate 181, asparagine 183, tyrosine 185, and aspartate 190. Aspartate 360, asparagine 362, aspartate 364, lysine 366, and aspartate 371 together coordinate Ca(2+). Residues 378-422 (LNINKIGGGTNYSDSYPSDSHVTIQNSSTTPSPSTPITNTAAAIA) are linker loop domain. The interval 432–720 (AQQVLESIEN…KALLPDAEYK (289 aa)) is carrier domain. 3 Solcar repeats span residues 436–526 (LESI…LRDL), 535–616 (IYFP…MKTI), and 624–712 (LGPM…LQKA). 6 helical membrane-spanning segments follow: residues 442 to 459 (FALG…VYPI), 501 to 520 (GILP…LTVN), 545 to 558 (GFAG…TNPL), 591 to 610 (GAGA…FPTY), 630 to 647 (LLAG…VTPA), and 687 to 706 (GALA…LVSY). Positions 721–772 (PPTNAPITQKDFDVIRGNTNTVQRVIDMESKFGTLHQTRDNNKSSNGGENKN) are C-terminal domain. The interval 751–772 (KFGTLHQTRDNNKSSNGGENKN) is disordered. The segment covering 763–772 (KSSNGGENKN) has biased composition (low complexity).

This sequence belongs to the mitochondrial carrier (TC 2.A.29) family. Homodimer (via N-terminus).

It is found in the mitochondrion inner membrane. In terms of biological role, mitochondrial and calcium-binding carrier that catalyzes the calcium-dependent exchange of cytoplasmic glutamate with mitochondrial aspartate across the mitochondrial inner membrane. The sequence is that of Calcium-binding mitochondrial carrier protein (mcfO) from Dictyostelium discoideum (Social amoeba).